Reading from the N-terminus, the 363-residue chain is Phosphoribosylformylglycinamidine cyclo-ligase (363 aa).

It belongs to the AIR synthase family.

The protein resides in the cytoplasm. It carries out the reaction 2-formamido-N(1)-(5-O-phospho-beta-D-ribosyl)acetamidine + ATP = 5-amino-1-(5-phospho-beta-D-ribosyl)imidazole + ADP + phosphate + H(+). It functions in the pathway purine metabolism; IMP biosynthesis via de novo pathway; 5-amino-1-(5-phospho-D-ribosyl)imidazole from N(2)-formyl-N(1)-(5-phospho-D-ribosyl)glycinamide: step 2/2. This chain is Phosphoribosylformylglycinamidine cyclo-ligase, found in Bartonella tribocorum (strain CIP 105476 / IBS 506).